The chain runs to 707 residues: Ornithine decarboxylase (707 aa).

The interval 83-102 is disordered; the sequence is NRNPLSRADSAAGREETAQT. Lysine 288 bears the N6-(pyridoxal phosphate)lysine mark. Pyridoxal 5'-phosphate is bound by residues serine 421, glycine 458, and 498–501; that span reads EPGR. 561-562 serves as a coordination point for substrate; the sequence is FD. Cysteine 634 serves as the catalytic Proton donor; shared with dimeric partner. Position 635 (aspartate 635) interacts with substrate. Tyrosine 663 lines the pyridoxal 5'-phosphate pocket.

It belongs to the Orn/Lys/Arg decarboxylase class-II family. Homodimer. Only the dimer is catalytically active, as the active sites are constructed of residues from both monomers. It depends on pyridoxal 5'-phosphate as a cofactor.

It carries out the reaction L-ornithine + H(+) = putrescine + CO2. Its pathway is amine and polyamine biosynthesis; putrescine biosynthesis via L-ornithine pathway; putrescine from L-ornithine: step 1/1. With respect to regulation, inhibited by antizyme (AZ) in response to polyamine levels. AZ inhibits the assembly of the functional homodimer by binding to ODC monomers and targeting them for ubiquitin-independent proteolytic destruction by the 26S proteasome. Inhibited by 1-amino-oxy-3-aminopropane (APA, an isosteric analog of putrescine). Irreversibly inhibited by alpha-difluoromethylornithine (DFMO, a curative agent of West African sleeping sickness). Catalyzes the first and rate-limiting step of polyamine biosynthesis that converts ornithine into putrescine, which is the precursor for the polyamines, spermidine and spermine. Polyamines are essential for cell proliferation and are implicated in cellular processes, ranging from DNA replication to apoptosis. In Leishmania donovani, this protein is Ornithine decarboxylase.